The following is a 943-amino-acid chain: Isoleucine--tRNA ligase (943 aa).

The 'HIGH' region motif lies at 58-68 (PYANGTIHIGH). An L-isoleucyl-5'-AMP-binding site is contributed by Glu-567. Positions 608-612 (KMSKS) match the 'KMSKS' region motif. Position 611 (Lys-611) interacts with ATP. Cys-906, Cys-909, Cys-926, and Cys-929 together coordinate Zn(2+).

It belongs to the class-I aminoacyl-tRNA synthetase family. IleS type 1 subfamily. Monomer. Requires Zn(2+) as cofactor.

It is found in the cytoplasm. The catalysed reaction is tRNA(Ile) + L-isoleucine + ATP = L-isoleucyl-tRNA(Ile) + AMP + diphosphate. In terms of biological role, catalyzes the attachment of isoleucine to tRNA(Ile). As IleRS can inadvertently accommodate and process structurally similar amino acids such as valine, to avoid such errors it has two additional distinct tRNA(Ile)-dependent editing activities. One activity is designated as 'pretransfer' editing and involves the hydrolysis of activated Val-AMP. The other activity is designated 'posttransfer' editing and involves deacylation of mischarged Val-tRNA(Ile). The sequence is that of Isoleucine--tRNA ligase from Pseudomonas fluorescens (strain Pf0-1).